We begin with the raw amino-acid sequence, 68 residues long: Protein transport protein Sec61 subunit gamma (68 aa).

Residues 1–32 lie on the Cytoplasmic side of the membrane; the sequence is MDQVMAWVEPGKQFAKDSIRLVKRCTKPDRKE. A helical membrane pass occupies residues 33–61; it reads FQKIAVATAIGFAIMGFIGFFVKLIHIPI. Residues 62-68 lie on the Extracellular side of the membrane; sequence NNIIVGS.

Belongs to the SecE/SEC61-gamma family. In terms of assembly, heterotrimeric complex composed of SEC61-alpha, SEC61-beta and SEC61-gamma. Component of the ribosome-associated ER translocon complex.

The protein resides in the endoplasmic reticulum membrane. Necessary for protein translocation in the endoplasmic reticulum and multi-pass membrane protein biogenesis. The polypeptide is Protein transport protein Sec61 subunit gamma (SEC61G) (Ciona intestinalis (Transparent sea squirt)).